A 313-amino-acid polypeptide reads, in one-letter code: Dehydrodolichyl diphosphate synthase CPT5, chloroplastic (313 aa).

The N-terminal 42 residues, 1 to 42 (MAFSFQLQQVFPFPVKFCSQPKSIKLQIFPNLTKRLPIHPLA), are a transit peptide targeting the chloroplast. Aspartate 89 is a catalytic residue.

It belongs to the UPP synthase family. It depends on Mg(2+) as a cofactor. Expressed in leaf trichomes, stem trichomes and old leaves. Expressed at low levels in young leaves and flowers.

The protein resides in the plastid. It localises to the chloroplast. It catalyses the reaction n isopentenyl diphosphate + (2E,6E)-farnesyl diphosphate = a di-trans,poly-cis-polyprenyl diphosphate + n diphosphate. Catalyzes cis-prenyl chain elongation to produce the polyprenyl backbone of dolichol, a glycosyl carrier-lipid required for the biosynthesis of several classes of glycoprotein. The polypeptide is Dehydrodolichyl diphosphate synthase CPT5, chloroplastic (Solanum lycopersicum (Tomato)).